The following is a 967-amino-acid chain: A disintegrin and metalloproteinase with thrombospondin motifs 1 (967 aa).

Disordered regions lie at residues 1–27 (MQRAVPEGFGRRKLGSDMGNAERAPGS) and 192–250 (GDVG…SIRK). Residues 1–49 (MQRAVPEGFGRRKLGSDMGNAERAPGSRSFGPVPTLLLLAAALLAVSDA) form the signal peptide. The propeptide occupies 50-252 (LGRPSEEDEE…TGTGSIRKKR (203 aa)). A Cysteine switch motif is present at residues 196-203 (GTCGVVDD). Residue C198 participates in Zn(2+) binding. The segment covering 203–212 (DEPRPTGKAE) has biased composition (basic and acidic residues). Residues 213 to 226 (TEDEDEGTEGEDEG) are compositionally biased toward acidic residues. In terms of domain architecture, Peptidase M12B spans 258 to 467 (RYVETMLVAD…GHGECLMDKP (210 aa)). The Ca(2+) site is built by E261, D344, and D351. Disulfide bonds link C333-C385, C362-C367, C379-C462, and C417-C446. Residue H401 coordinates Zn(2+). E402 is a catalytic residue. 2 residues coordinate Zn(2+): H405 and H411. Residues C462 and D465 each contribute to the Ca(2+) site. A Disintegrin domain is found at 476 to 559 (DLPGTSYDAN…DRKHFDTPFH (84 aa)). Cystine bridges form between C488-C511, C499-C521, C506-C540, and C534-C545. N-linked (GlcNAc...) asparagine glycosylation occurs at N547. The TSP type-1 1 domain occupies 559–614 (HGSWGMWGPWGDCSRTCGGGVQYTMRECDNPVPKNGGKYCEGKRVRYRSCNLEDCP). 3 cysteine pairs are disulfide-bonded: C571–C608, C575–C613, and C586–C598. Residues N720 and N764 are each glycosylated (N-linked (GlcNAc...) asparagine). Positions 725–849 (KKISGSVTSA…YFVKKKKESF (125 aa)) are spacer. TSP type-1 domains are found at residues 854–905 (TFSA…RPCA) and 908–967 (PCPQ…AECS).

Zn(2+) serves as cofactor. Post-translationally, the precursor is cleaved by a furin endopeptidase. Glycosylated. Can be O-fucosylated by POFUT2 on a serine or a threonine residue found within the consensus sequence C1-X(2)-(S/T)-C2-G of the TSP type-1 repeat domains where C1 and C2 are the first and second cysteine residue of the repeat, respectively. Fucosylated repeats can then be further glycosylated by the addition of a beta-1,3-glucose residue by the glucosyltransferase, B3GALTL. Fucosylation mediates the efficient secretion of ADAMTS family members. Can also be C-glycosylated with one or two mannose molecules on tryptophan residues within the consensus sequence W-X-X-W of the TPRs, and N-glycosylated. These other glycosylations can also facilitate secretion.

It localises to the secreted. The protein localises to the extracellular space. It is found in the extracellular matrix. Functionally, metalloprotease which cleaves aggrecan, a cartilage proteoglycan, at the '1938-Glu-|-Leu-1939' site (within the chondroitin sulfate attachment domain), and may be involved in its turnover. Also cleaves COMP. Has angiogenic inhibitor activity. May play a critical role in follicular rupture. The polypeptide is A disintegrin and metalloproteinase with thrombospondin motifs 1 (ADAMTS1) (Homo sapiens (Human)).